Reading from the N-terminus, the 1201-residue chain is MRLLITLGPSGSTHGHSLHTDAGRRRGGRPFAQVVDELRAGQRVRTQGLKGAARGHVLARLHGALRAPLVCVAVDEEAADALAADLSFFLGGQGSLLAPRVLRLPADEVLPYDEVSPDAAAVTERLGALFHLGQGTRFPALVLSVRALHRKVLPLAVMRALAARVAVGQDFDRDSLARRLVRMGYQNSPLVEDVGTFSVRGDLLDVFSPLYDKPVRLEFFGDTIESIRAFDPQSQRTVDALKEVDLVPAREVLLTDETRPRAESAARAVADRINLPTIKLREQLDALREGLPGFGMEGLLPGFFEDGLSTVFDFLRDWSPEAPVIYLDDPLGQDRAADTLWEELERSHGAAEARQELICPPLEHFLSREDVNQRMQSFRVLEGGGLSLAQTERPPVHFSFGGTQDLREAILAHHGEEGALSPLVERLERWRELRVACVVACGTLSQADRLKRLLMDRNVMVKVHTEPLEDAVALYEPSIRAHLFTGEVSHGFVDGPGGLAVLADEEIFGARARRRPKRSKKLDAFGSGFGDLKEGDLIVHTDFGIGRYAGLTKMEVNGVPGDFLVLEYAGRDKIYLPVGRMRLIQKFSGGDPTQVQLDKLGTTSWEKTKKRVKEQLLKMAAELLQIAAARKAHPGHAFSAPDRYFAQFEADFEFEETPDQAKAIEDVLADMQKPEPMDRLVCGDVGYGKTEVAMRAAFKAALDRKQVAVLVPTTVLAQQHFLSFKKRFADYPVTVEVISGLKKAPEVREILKRAKEGKVDILIGTHKLLGGEVAFKELGLMIVDEEQRFGVKQKESLKKWRSQIDVLTLTATPIPRTLHMSMSGVRDMSIIATPPQDRRAIRTFVMKYEDTVVKEAIEREVARGGQVFFVHNRVESLPSIETQLRALVPQVSIGVAHGQMGEGQLEKVMLAFTEKKYQVLLCTSIIESGIDISSANTMIVNRADQFGLAQLYQLRGRVGRSKERAYAYLLVPSRRAVTKDAQRRLEVLQNFTELGAGFSIASHDLEIRGAGNLLGDKQSGAIAEIGFDMYAQLLEEAVAEMQGQPPKVQIEPDVTLPMPALIPDDYVSDVHQRLVFYKRFSQASHPDEVTDLRAELVDRYGEAPDEVDHLSELTLLKIDMRDLRLRGLEVGTTRLVVTLGADALLDGPKVAGLVQRSKGVYRLTPDMKLIARAPQGASGQDLISEAKKVLRDLSHCALPQA.

The interval 1 to 27 is disordered; that stretch reads MRLLITLGPSGSTHGHSLHTDAGRRRG. The Helicase ATP-binding domain maps to 670–831; that stretch reads DMQKPEPMDR…MSGVRDMSII (162 aa). An ATP-binding site is contributed by 683–690; that stretch reads GDVGYGKT. A DEEQ box motif is present at residues 784–787; sequence DEEQ. Residues 852–1006 enclose the Helicase C-terminal domain; sequence VVKEAIEREV…GFSIASHDLE (155 aa).

The protein in the N-terminal section; belongs to the UvrB family. This sequence in the C-terminal section; belongs to the helicase family. RecG subfamily.

The protein resides in the cytoplasm. Its function is as follows. Couples transcription and DNA repair by recognizing RNA polymerase (RNAP) stalled at DNA lesions. Mediates ATP-dependent release of RNAP and its truncated transcript from the DNA, and recruitment of nucleotide excision repair machinery to the damaged site. The sequence is that of Transcription-repair-coupling factor from Myxococcus xanthus.